Reading from the N-terminus, the 198-residue chain is Recombination protein RecR (198 aa).

The segment at 57–72 (CAQCRTLTEHSLCEYC) adopts a C4-type zinc-finger fold. The 96-residue stretch at 80–175 (SLLCIVESPA…RTTRIAHGIP (96 aa)) folds into the Toprim domain.

It belongs to the RecR family.

May play a role in DNA repair. It seems to be involved in an RecBC-independent recombinational process of DNA repair. It may act with RecF and RecO. In Methylococcus capsulatus (strain ATCC 33009 / NCIMB 11132 / Bath), this protein is Recombination protein RecR.